A 406-amino-acid polypeptide reads, in one-letter code: uncharacterized protein (406 aa).

It is found in the plastid. The protein localises to the chloroplast. This is an uncharacterized protein from Euglena gracilis.